Consider the following 312-residue polypeptide: Very long chain fatty acid elongase 4 (312 aa).

Asn20 is a glycosylation site (N-linked (GlcNAc...) asparagine). 7 helical membrane passes run 42 to 62, 78 to 98, 127 to 147, 165 to 185, 188 to 208, 217 to 237, and 246 to 266; these read LMQSPWPTISISTLYLLFVWL, VLIIYNFGMVLLNLFIFRELF, ALWWYFVSKGVEYLDTVFFIL, MFTLWWIGIKWVAGGQAFFGA, NSFIHVIMYSYYGLTAFGPWI, YLTMLQLVQFHVTIGHTALSL, and WMHWALIAYAISFIFLFLNFY. Over residues 273–292 the composition is skewed to polar residues; the sequence is PKQSKTGKTATNGISSNGVN. A disordered region spans residues 273-312; it reads PKQSKTGKTATNGISSNGVNKSEKALENGKPQKNGKPKGE. A glycan (N-linked (GlcNAc...) asparagine) is linked at Asn292. Residues 308–312 carry the Di-lysine motif motif; it reads KPKGE.

The protein belongs to the ELO family. ELOVL4 subfamily. In terms of assembly, oligomer. In terms of processing, N-glycosylated. As to expression, expressed in the retina, exclusively in photoreceptor cells and in the brain, skin, testis and lens.

The protein localises to the endoplasmic reticulum membrane. It carries out the reaction a very-long-chain acyl-CoA + malonyl-CoA + H(+) = a very-long-chain 3-oxoacyl-CoA + CO2 + CoA. The enzyme catalyses hexacosanoyl-CoA + malonyl-CoA + H(+) = 3-oxooctacosanyol-CoA + CO2 + CoA. It catalyses the reaction octacosanoyl-CoA + malonyl-CoA + H(+) = 3-oxo-triacontanoyl-CoA + CO2 + CoA. The catalysed reaction is triacontanoyl-CoA + malonyl-CoA + H(+) = 3-oxo-dotriacontanoyl-CoA + CO2 + CoA. It carries out the reaction (19Z,22Z,25Z,28Z,31Z)-tetratriacontapentaenoyl-CoA + malonyl-CoA + H(+) = 3-oxo-(21Z,24Z,27Z,30Z,33Z)-hexatriacontapentaenoyl-CoA + CO2 + CoA. The enzyme catalyses (4Z,7Z,10Z,13Z,16Z,19Z)-docosahexaenoyl-CoA + malonyl-CoA + H(+) = 3-oxo-(6Z,9Z,12Z,15Z,18Z,21Z)-tetracosahexaenoyl-CoA + CO2 + CoA. It catalyses the reaction (7Z,10Z,13Z,16Z)-docosatetraenoyl-CoA + malonyl-CoA + H(+) = (9Z,12Z,15Z,18Z)-3-oxotetracosatetraenoyl-CoA + CO2 + CoA. The catalysed reaction is (11Z,14Z,17Z,20Z,23Z)-hexacosapentaenoyl-CoA + malonyl-CoA + H(+) = 3-oxo-(13Z,16Z,19Z,22Z,25Z)-octacosapentaenoyl-CoA + CO2 + CoA. It carries out the reaction (13Z,16Z,19Z,22Z,25Z)-octacosapentaenoyl-CoA + malonyl-CoA + H(+) = 3-oxo-(15Z,18Z,21Z,24Z,27Z)-triacontapentaenoyl-CoA + CO2 + CoA. The enzyme catalyses (15Z,18Z,21Z,24Z,27Z)-triacontapentaenoyl-CoA + malonyl-CoA + H(+) = 3-oxo-(17Z,20Z,23Z,26Z,29Z)-dotriacontapentaenoyl-CoA + CO2 + CoA. It catalyses the reaction (17Z,20Z,23Z,26Z,29Z)-dotriacontapentaenoyl-CoA + malonyl-CoA + H(+) = 3-oxo-(19Z,22Z,25Z,28Z,31Z)-tetratriacontapentaenoyl-CoA + CO2 + CoA. The catalysed reaction is (21Z,24Z,27Z,30Z,33Z)-hexatriacontapentaenoyl-CoA + malonyl-CoA + H(+) = 3-oxo-(23Z,26Z,29Z,32Z,35Z)-octatriacontapentaenoyl-CoA + CO2 + CoA. It carries out the reaction (11Z,14Z,17Z,20Z)-hexacosatetraenoyl-CoA + malonyl-CoA + H(+) = (13Z,16Z,19Z,22Z)-3-oxooctacosatetraenoyl-CoA + CO2 + CoA. The enzyme catalyses (13Z,16Z,19Z,22Z)-octacosatetraenoyl-CoA + malonyl-CoA + H(+) = 3-oxo-(15Z,18Z,21Z,24Z)-triacontatetraenoyl-CoA + CO2 + CoA. It catalyses the reaction (15Z,18Z,21Z,24Z)-triacontatetraenoyl-CoA + malonyl-CoA + H(+) = 3-oxo-(17Z,20Z,23Z,26Z)-dotriacontatetraenoyl-CoA + CO2 + CoA. The catalysed reaction is (17Z,20Z,23Z,26Z)-dotriacontatetraenoyl-CoA + malonyl-CoA + H(+) = 3-oxo-(19Z,22Z,25Z,28Z)-tetratriacontatetraenoyl-CoA + CO2 + CoA. It carries out the reaction (19Z,22Z,25Z,28Z)-tetratriacontatetraenoyl-CoA + malonyl-CoA + H(+) = 3-oxo-(21Z,24Z,27Z,30Z)-hexatriacontatetraenoyl-CoA + CO2 + CoA. The enzyme catalyses (21Z,24Z,27Z,30Z)-hexatriacontatetraenoyl-CoA + malonyl-CoA + H(+) = 3-oxo-(23Z,26Z,29Z,32Z)-octatriacontatetraenoyl-CoA + CO2 + CoA. It catalyses the reaction (6Z,9Z,12Z,15Z,18Z,21Z)-tetracosahexaenoyl-CoA + malonyl-CoA + H(+) = 3-oxo-(8Z,11Z,14Z,17Z,20Z,23Z)-hexacosahexaenoyl-CoA + CO2 + CoA. The catalysed reaction is (8Z,11Z,14Z,17Z,20Z,23Z)-hexacosahexaenoyl-CoA + malonyl-CoA + H(+) = 3-oxo-(10Z,13Z,16Z,19Z,22Z,25Z)-octacosahexaenoyl-CoA + CO2 + CoA. It carries out the reaction (10Z,13Z,16Z,19Z,22Z,25Z)-octacosahexaenoyl-CoA + malonyl-CoA + H(+) = 3-oxo-(12Z,15Z,18Z,21Z,24Z,27Z)-triacontahexaenoyl-CoA + CO2 + CoA. The enzyme catalyses (12Z,15Z,18Z,21Z,24Z,27Z)-triacontahexaenoyl-CoA + malonyl-CoA + H(+) = 3-oxo-(14Z,17Z,20Z,23Z,26Z,29Z)-dotriacontahexaenoyl-CoA + CO2 + CoA. It catalyses the reaction (14Z,17Z,20Z,23Z,26Z,29Z)-dotriacontahexaenoyl-CoA + malonyl-CoA + H(+) = 3-oxo-(16Z,19Z,22Z,25Z,28Z,31Z)-tetratriacontahexaenoyl-CoA + CO2 + CoA. The catalysed reaction is (16Z,19Z,22Z,25Z,28Z,31Z)-tetratriacontahexaenoyl-CoA + malonyl-CoA + H(+) = 3-oxo-(18Z,21Z,24Z,27Z,30Z,33Z)-hexatriacontahexaenoyl-CoA + CO2 + CoA. It carries out the reaction (9Z,12Z,15Z,18Z,21Z)-tetracosapentaenoyl-CoA + malonyl-CoA + H(+) = 3-oxo-(11Z,14Z,17Z,20Z,23Z)-hexacosapentaenoyl-CoA + CO2 + CoA. It participates in lipid metabolism; fatty acid biosynthesis. Functionally, catalyzes the first and rate-limiting reaction of the four reactions that constitute the long-chain fatty acids elongation cycle. This endoplasmic reticulum-bound enzymatic process allows the addition of 2 carbons to the chain of long- and very long-chain fatty acids (VLCFAs) per cycle. Condensing enzyme that catalyzes the synthesis of very long chain saturated (VLC-SFA) and polyunsaturated (PUFA) fatty acids that are involved in multiple biological processes as precursors of membrane lipids and lipid mediators. May play a critical role in early brain and skin development. The protein is Very long chain fatty acid elongase 4 of Mus musculus (Mouse).